Reading from the N-terminus, the 396-residue chain is Acetate kinase (396 aa).

Asn7 is a binding site for Mg(2+). Residue Lys14 coordinates ATP. Arg88 contributes to the substrate binding site. Catalysis depends on Asp145, which acts as the Proton donor/acceptor. ATP is bound by residues 205-209 (HLGNG), 279-281 (DFR), and 327-331 (GIGEN). Residue Glu381 coordinates Mg(2+).

Belongs to the acetokinase family. In terms of assembly, homodimer. Requires Mg(2+) as cofactor. Mn(2+) serves as cofactor.

It localises to the cytoplasm. The enzyme catalyses acetate + ATP = acetyl phosphate + ADP. The protein operates within metabolic intermediate biosynthesis; acetyl-CoA biosynthesis; acetyl-CoA from acetate: step 1/2. In terms of biological role, catalyzes the formation of acetyl phosphate from acetate and ATP. Can also catalyze the reverse reaction. The sequence is that of Acetate kinase from Campylobacter jejuni subsp. doylei (strain ATCC BAA-1458 / RM4099 / 269.97).